The sequence spans 544 residues: Chaperonin GroEL (544 aa).

ATP-binding positions include 29–32 (TLGP), 86–90 (DGTTT), G413, 476–478 (NAA), and D492.

This sequence belongs to the chaperonin (HSP60) family. As to quaternary structure, forms a cylinder of 14 subunits composed of two heptameric rings stacked back-to-back. Interacts with the co-chaperonin GroES.

It is found in the cytoplasm. It catalyses the reaction ATP + H2O + a folded polypeptide = ADP + phosphate + an unfolded polypeptide.. Together with its co-chaperonin GroES, plays an essential role in assisting protein folding. The GroEL-GroES system forms a nano-cage that allows encapsulation of the non-native substrate proteins and provides a physical environment optimized to promote and accelerate protein folding. The protein is Chaperonin GroEL of Bacillus pumilus (strain SAFR-032).